The sequence spans 373 residues: Transcription factor NF-E2 45 kDa subunit (373 aa).

The tract at residues Met-1–Tyr-83 is required for interaction with MAPK8. Residues Met-1–Glu-206 are transactivation domain. 2 short sequence motifs (PXY motif) span residues Pro-61–Tyr-65 and Pro-79–Tyr-83. The disordered stretch occupies residues Leu-127–Leu-150. A Phosphoserine; by MAPK8 modification is found at Ser-157. The residue at position 170 (Ser-170) is a Phosphoserine; by PKA. The disordered stretch occupies residues Leu-205–Asp-226. Positions Leu-266–Leu-329 constitute a bZIP domain. Positions Arg-268 to Lys-287 are basic motif. Residues Ile-291–Leu-298 are leucine-zipper. Lys-368 is covalently cross-linked (Glycyl lysine isopeptide (Lys-Gly) (interchain with G-Cter in SUMO1)).

This sequence belongs to the bZIP family. CNC subfamily. In terms of assembly, homodimer; can bind DNA as a homodimer. Erythroid transcription activator nuclear factor erythroid-derived 2 (NF-E2), composed of a heterodimer of NFE2 and MAFK, possesses transactivation activity on beta-globin. Also forms high affinity heterodimer with MAFG; the interaction promotes erythropoiesis. Interacts (via the PXY motif 1) with ITCH (via the WW 1 domain); the interaction promotes 'Lys63'-linked ubiquitination of NFE2, translocates it to the cytoplasm and inhibits its transactivation activity. Interacts with KMT2D/MLL2; the interaction promotes transactivation of the beta-globin locus. Interacts with MAPK8 (phosphorylated form); the interaction leads to phosphorylation of NFE2 in undifferentiated cells. Phosphorylated on serine residues. In undifferentiated erythrocytes, phosphorylated by MAPK8 which then leads to ubiquitination and protein degradation. In terms of processing, sumoylated. Sumoylation is required for translocation to nuclear bodies PODs, anchoring to the gene loci, and transactivation of the beta-globin gene. Post-translationally, ubiquitinated mainly by 'Lys63'-linked ubiquitin. Polyubiquitination with 'Lys63'-linked ubiquitin by ITCH retains NFE2 in the cytoplasm preventing its transactivation activity. In undifferentiated erythrocyte, ubiquitinated after MAPK8-mediatd phosphorylation leading to protein degradation. As to expression, expressed in hematopoietic cells and also in colon and testis.

The protein localises to the nucleus. It is found in the PML body. Its subcellular location is the cytoplasm. Functionally, component of the NF-E2 complex essential for regulating erythroid and megakaryocytic maturation and differentiation. Binds to the hypersensitive site 2 (HS2) of the beta-globin control region (LCR). This subunit (NFE2) recognizes the TCAT/C sequence of the AP-1-like core palindrome present in a number of erythroid and megakaryocytic gene promoters. Requires MAFK or other small MAF proteins for binding to the NF-E2 motif. May play a role in all aspects of hemoglobin production from globin and heme synthesis to procurement of iron. This is Transcription factor NF-E2 45 kDa subunit (NFE2) from Homo sapiens (Human).